The sequence spans 101 residues: Small ribosomal subunit protein uS14 (101 aa).

The protein belongs to the universal ribosomal protein uS14 family. In terms of assembly, part of the 30S ribosomal subunit. Contacts proteins S3 and S10.

Its function is as follows. Binds 16S rRNA, required for the assembly of 30S particles and may also be responsible for determining the conformation of the 16S rRNA at the A site. The chain is Small ribosomal subunit protein uS14 from Caulobacter sp. (strain K31).